We begin with the raw amino-acid sequence, 676 residues long: DNA ligase (676 aa).

Residues 34–38, 84–85, and Glu116 contribute to the NAD(+) site; these read DAEYD and SL. Lys118 serves as the catalytic N6-AMP-lysine intermediate. NAD(+) is bound by residues Arg139, Glu174, Lys294, and Lys318. Positions 412, 415, 428, and 433 each coordinate Zn(2+). The region spanning 589-676 is the BRCT domain; sequence KGGEALKGLT…RTGKKAEELV (88 aa).

This sequence belongs to the NAD-dependent DNA ligase family. LigA subfamily. Requires Mg(2+) as cofactor. It depends on Mn(2+) as a cofactor.

The catalysed reaction is NAD(+) + (deoxyribonucleotide)n-3'-hydroxyl + 5'-phospho-(deoxyribonucleotide)m = (deoxyribonucleotide)n+m + AMP + beta-nicotinamide D-nucleotide.. Its function is as follows. DNA ligase that catalyzes the formation of phosphodiester linkages between 5'-phosphoryl and 3'-hydroxyl groups in double-stranded DNA using NAD as a coenzyme and as the energy source for the reaction. It is essential for DNA replication and repair of damaged DNA. The chain is DNA ligase from Thermus thermophilus (strain ATCC BAA-163 / DSM 7039 / HB27).